The primary structure comprises 254 residues: rRNA N-glycosylase sapovaccarin-S2 (254 aa).

It belongs to the ribosome-inactivating protein family. Type 1 RIP subfamily. In terms of tissue distribution, expressed in seeds; most abundant in the perisperm.

It catalyses the reaction Endohydrolysis of the N-glycosidic bond at one specific adenosine on the 28S rRNA.. In terms of biological role, exhibits N-glycosylase activity. Catalyzes the release of one adenine from a ribosome. Acts as a ribosome-inactivating protein and inhibits protein synthesis. Induces cell death in Huh-7 liver cells. May contribute to the protection against plant pests and predators or play a role in regulating the death of plant cells. This chain is rRNA N-glycosylase sapovaccarin-S2, found in Gypsophila vaccaria (Cow soapwort).